We begin with the raw amino-acid sequence, 672 residues long: Hydroxyproline O-galactosyltransferase GALT5 (672 aa).

The Cytoplasmic segment spans residues 1–28 (MKKPKLSKVEKIDKIDLFSSLWKQRSVR). Residues 29–49 (VIMAIGFLYLVIVSVEIPLVF) form a helical; Signal-anchor for type II membrane protein membrane-spanning segment. The Lumenal segment spans residues 50–672 (KSWSSSSVPL…QNKPECCNMR (623 aa)). The Galectin domain occupies 191–392 (KLMELPCGLT…DIDVHSVFVA (202 aa)). Asn306 and Asn620 each carry an N-linked (GlcNAc...) asparagine glycan.

It belongs to the glycosyltransferase 31 family. Mn(2+) serves as cofactor. As to expression, expressed in juvenile leaves, stems, cauline leaves and siliques.

The protein resides in the golgi apparatus membrane. Its pathway is protein modification; protein glycosylation. Its function is as follows. Possesses hydroxyproline O-galactosyltransferase activity. Transfers galactose from UDP-galactose to hydroxyproline residues in the arabinogalactan proteins (AGPs). Is specific for AGPs containing non-contiguous peptidyl hydroxyproline residues. Utilizes UDP-galactose solely as sugar donor. The addition of galactose onto the peptidyl hydroxyproline residues in AGP core proteins represents the first committed step in arabinogalactan polysaccharide addition. AGP glycans play essential roles in both vegetative and reproductive plant growth. This chain is Hydroxyproline O-galactosyltransferase GALT5, found in Arabidopsis thaliana (Mouse-ear cress).